A 584-amino-acid chain; its full sequence is Proline--tRNA ligase (584 aa).

The segment at 242 to 261 (APPASNPEERPATQVHDTPD) is disordered.

Belongs to the class-II aminoacyl-tRNA synthetase family. ProS type 1 subfamily. Homodimer.

It localises to the cytoplasm. The catalysed reaction is tRNA(Pro) + L-proline + ATP = L-prolyl-tRNA(Pro) + AMP + diphosphate. In terms of biological role, catalyzes the attachment of proline to tRNA(Pro) in a two-step reaction: proline is first activated by ATP to form Pro-AMP and then transferred to the acceptor end of tRNA(Pro). As ProRS can inadvertently accommodate and process non-cognate amino acids such as alanine and cysteine, to avoid such errors it has two additional distinct editing activities against alanine. One activity is designated as 'pretransfer' editing and involves the tRNA(Pro)-independent hydrolysis of activated Ala-AMP. The other activity is designated 'posttransfer' editing and involves deacylation of mischarged Ala-tRNA(Pro). The misacylated Cys-tRNA(Pro) is not edited by ProRS. In Salinispora arenicola (strain CNS-205), this protein is Proline--tRNA ligase.